An 832-amino-acid chain; its full sequence is Translation initiation factor IF-2 (832 aa).

Residues 1–249 (MSDDNDKPRT…GGGSSAPREK (249 aa)) are disordered. Over residues 53 to 71 (TPAPAPEPAPEPAPAPAPA) the composition is skewed to pro residues. Over residues 89–144 (PQERVARLQREAEEERLKLAEDARKRDDQKAKQNADDEKKRQEENKKAEEEAEKQA) the composition is skewed to basic and acidic residues. The span at 145–156 (AAEAEAAAAAEA) shows a compositional bias: low complexity. Over residues 180–200 (PEPKRPEKKKEEKKPARGGAK) the composition is skewed to basic and acidic residues. The tr-type G domain occupies 333 to 503 (PRPPVVTIMG…ELQAELLELK (171 aa)). The interval 342–349 (GHVDHGKT) is G1. 342-349 (GHVDHGKT) contacts GTP. Positions 367 to 371 (GITQH) are G2. The segment at 389-392 (DTPG) is G3. GTP-binding positions include 389–393 (DTPGH) and 443–446 (NKCD). The G4 stretch occupies residues 443–446 (NKCD). The segment at 479–481 (SAT) is G5.

The protein belongs to the TRAFAC class translation factor GTPase superfamily. Classic translation factor GTPase family. IF-2 subfamily.

Its subcellular location is the cytoplasm. Functionally, one of the essential components for the initiation of protein synthesis. Protects formylmethionyl-tRNA from spontaneous hydrolysis and promotes its binding to the 30S ribosomal subunits. Also involved in the hydrolysis of GTP during the formation of the 70S ribosomal complex. This Erythrobacter litoralis (strain HTCC2594) protein is Translation initiation factor IF-2.